The primary structure comprises 164 residues: MSKKALSRVVYPGTFDPITNGHLDLIERAAKMFDEVIIAVAASPSKNTMFTLEERVDFARQVTRHLDNVTAQGFSGLMVDFARAVDANVLIRGLRTTVDFEYEFGLTNMYRRLLPGLESVFLTPSEEHAFISSTIVREVAIHGGDVTQFVPTVVAEALHQKKKV.

T14 is a substrate binding site. ATP-binding positions include 14-15 (TF) and H22. Positions 46, 78, and 92 each coordinate substrate. Residues 93-95 (GLR), E103, and 128-134 (HAFISST) each bind ATP.

This sequence belongs to the bacterial CoaD family. Homohexamer. Requires Mg(2+) as cofactor.

It localises to the cytoplasm. The catalysed reaction is (R)-4'-phosphopantetheine + ATP + H(+) = 3'-dephospho-CoA + diphosphate. It participates in cofactor biosynthesis; coenzyme A biosynthesis; CoA from (R)-pantothenate: step 4/5. In terms of biological role, reversibly transfers an adenylyl group from ATP to 4'-phosphopantetheine, yielding dephospho-CoA (dPCoA) and pyrophosphate. The sequence is that of Phosphopantetheine adenylyltransferase from Vibrio vulnificus (strain CMCP6).